The following is a 383-amino-acid chain: MGLLCSRSRHHTEDTDENTQAAEIERRIEQEAKAEKHIRKLLLLGAGESGKSTIFKQIKLLFQTGFDEGELKSYVPVIHANVYQTIKLLHDGTKEFAQNETDSAKYMLSSESIAIGEKLSEIGGRLDYPRLTKDIAEGIETLWKDPAIQETCARGNELQVPDCTKYLMENLKRLSDINYIPTKEDVLYARVRTTGVVEIQFSPVGENKKSGEVYRLFDVGGQRNERRKWIHLFEGVTAVIFCAAISEYDQTLFEDEQKNRMMETKELFDWVLKQPCFEKTSFMLFLNKFDIFEKKVLDVPLNVCEWFRDYQPVSSGKQEIEHAYEFVKKKFEELYYQNTAPDRVDRVFKIYRTTALDQKLVKKTFKLVDETLRRRNLLEAGLL.

A disordered region spans residues 1-20 (MGLLCSRSRHHTEDTDENTQ). Gly-2 carries the N-myristoyl glycine lipid modification. A lipid anchor (S-palmitoyl cysteine) is attached at Cys-5. The region spanning 37–383 (HIRKLLLLGA…RRNLLEAGLL (347 aa)) is the G-alpha domain. The segment at 40–53 (KLLLLGAGESGKST) is G1 motif. Residues Glu-48, Ser-49, Gly-50, Lys-51, Ser-52, Thr-53, Asp-162, Leu-187, Tyr-188, Thr-193, Gly-221, Asn-287, Lys-288, Asp-290, and Ala-355 each coordinate GTP. Ser-52 contacts Mg(2+). The G2 motif stretch occupies residues 185 to 193 (DVLYARVRT). Thr-193 is a Mg(2+) binding site. The G3 motif stretch occupies residues 214 to 223 (YRLFDVGGQR). The tract at residues 283 to 290 (MLFLNKFD) is G4 motif. Residues 353 to 358 (TTALDQ) form a G5 motif region.

This sequence belongs to the G-alpha family. As to quaternary structure, g proteins are composed of 3 units; alpha, beta and gamma. The alpha chain contains the guanine nucleotide binding site. Interacts with RGS1, THF1, the pirin protein PRN1, GTG1 and GTG2. Binds to GCR1. May interact with ADT3. No interactions with RACK1A, RACK1B or RACK1C. Interacts with PLDALPHA1. Interacts with CAND2/PMTR1. It depends on Mg(2+) as a cofactor. As to expression, more abundant in roots and/or leaves.

The protein resides in the cell membrane. Functionally, exhibits a fast rate of basal nucleotide exchange. Guanine nucleotide-binding proteins (G proteins) are involved as modulators or transducers in various transmembrane signaling systems. Together with GCR1, may regulate the cell cycle via a signaling cascade that uses phosphatidylinositol-specific phospholipase C (PI-PLC) as an effector and inositol 1,4,5-trisphosphate (IP(3)) as a second messenger. Promotes abscisic acid (ABA) responses in guard cells. Involved in the blue light (BL) signaling. Together with GCR1 and ADT3, required for BL-mediated synthesis of phenylpyruvate and subsequently of phenylalanine (Phe), in etiolated seedlings. Modulates root architecture (e.g. lateral root formation). Negatively regulated by RGS1. In collaboration with CAND2/PMTR1, regulates the melatonin-mediated stomatal closure involving H(2)O(2) and Ca(2+) signals. The protein is Guanine nucleotide-binding protein alpha-1 subunit of Arabidopsis thaliana (Mouse-ear cress).